Reading from the N-terminus, the 208-residue chain is LexA repressor (208 aa).

Residues arginine 28–lysine 48 constitute a DNA-binding region (H-T-H motif). Catalysis depends on for autocatalytic cleavage activity residues serine 125 and lysine 162.

It belongs to the peptidase S24 family. In terms of assembly, homodimer.

The enzyme catalyses Hydrolysis of Ala-|-Gly bond in repressor LexA.. Functionally, represses a number of genes involved in the response to DNA damage (SOS response), including recA and lexA. In the presence of single-stranded DNA, RecA interacts with LexA causing an autocatalytic cleavage which disrupts the DNA-binding part of LexA, leading to derepression of the SOS regulon and eventually DNA repair. The polypeptide is LexA repressor (Alteromonas mediterranea (strain DSM 17117 / CIP 110805 / LMG 28347 / Deep ecotype)).